A 436-amino-acid chain; its full sequence is Trigger factor (436 aa).

Positions Gly-162–Pro-247 constitute a PPIase FKBP-type domain.

The protein belongs to the FKBP-type PPIase family. Tig subfamily.

The protein resides in the cytoplasm. The enzyme catalyses [protein]-peptidylproline (omega=180) = [protein]-peptidylproline (omega=0). Its function is as follows. Involved in protein export. Acts as a chaperone by maintaining the newly synthesized protein in an open conformation. Functions as a peptidyl-prolyl cis-trans isomerase. This Neisseria meningitidis serogroup C (strain 053442) protein is Trigger factor.